The sequence spans 419 residues: uncharacterized protein (419 aa).

Helical transmembrane passes span M5–I25, A26–I46, F53–L73, V102–I122, V144–V164, F170–F190, A210–L230, L234–L254, A274–F294, I309–P329, M332–L352, M360–I380, and L396–L416.

Belongs to the YiaN/YgiK family.

Its subcellular location is the cell inner membrane. This is an uncharacterized protein from Sinorhizobium fredii (strain NBRC 101917 / NGR234).